The sequence spans 1301 residues: DNA-directed RNA polymerase subunit beta (1301 aa).

It belongs to the RNA polymerase beta chain family. In plastids the minimal PEP RNA polymerase catalytic core is composed of four subunits: alpha, beta, beta', and beta''. When a (nuclear-encoded) sigma factor is associated with the core the holoenzyme is formed, which can initiate transcription.

It localises to the plastid. The protein resides in the chloroplast. The enzyme catalyses RNA(n) + a ribonucleoside 5'-triphosphate = RNA(n+1) + diphosphate. Its function is as follows. DNA-dependent RNA polymerase catalyzes the transcription of DNA into RNA using the four ribonucleoside triphosphates as substrates. This chain is DNA-directed RNA polymerase subunit beta, found in Chlorella vulgaris (Green alga).